The chain runs to 1183 residues: Phospholipid-transporting ATPase FetA (1183 aa).

3 helical membrane passes run 96-116 (ISSL…SITG), 299-319 (VLVV…SIGH), and 348-368 (ALIF…SLYV). D416 serves as the catalytic 4-aspartylphosphate intermediate. ATP-binding residues include D416, K417, T418, E519, F560, K583, R617, T697, G698, D699, R812, and K818. D416 contributes to the Mg(2+) binding site. T418 is a Mg(2+) binding site. D838 is a Mg(2+) binding site. ATP-binding residues include N841 and D842. D842 contacts Mg(2+). Transmembrane regions (helical) follow at residues 904-924 (FAFT…AQTV), 927-947 (IWFI…GLSL), 981-1001 (CLLH…GTVF), 1014-1034 (FQSF…MQIA), 1049-1069 (WGSL…GLCL), and 1090-1110 (IWLC…GYNF).

Belongs to the cation transport ATPase (P-type) (TC 3.A.3) family. Type IV subfamily. Requires Mg(2+) as cofactor. In terms of tissue distribution, highly expressed in testis.

It localises to the cytoplasmic vesicle. The protein resides in the secretory vesicle. The protein localises to the acrosome membrane. The enzyme catalyses ATP + H2O + phospholipidSide 1 = ADP + phosphate + phospholipidSide 2.. Its function is as follows. P4-ATPase flippase which catalyzes the hydrolysis of ATP coupled to the transport of aminophospholipids from the outer to the inner leaflet of various membranes and ensures the maintenance of asymmetric distribution of phospholipids. Phospholipid translocation also seems to be implicated in vesicle formation and in uptake of lipid signaling molecules. May play a role in phospholid transport across membranes and in acrosome formation. The polypeptide is Phospholipid-transporting ATPase FetA (Atp8b5) (Mus musculus (Mouse)).